The following is a 244-amino-acid chain: Dehydration-responsive element-binding protein 2E (244 aa).

Positions 1 to 25 are disordered; that stretch reads MEKEDNGSKQSSSASVVSSRRRRRV. The Nuclear localization signal signature appears at 20 to 46; the sequence is RRRRRVVEPVEATLQRWEEEGLARARR. The segment at residues 69–134 is a DNA-binding region (AP2/ERF); the sequence is RFRGVRQRVW…YGPYARLNFP (66 aa).

Belongs to the AP2/ERF transcription factor family. ERF subfamily. As to expression, expressed in xylem tissues, stigma, anthers and region where sepals and petals attach the peduncle.

It is found in the nucleus. Functionally, transcriptional activator that binds specifically to the DNA sequence 5'-[AG]CCGAC-3'. Binding to the C-repeat/DRE element mediates abscisic acid-inducible transcription. Involved in the regulation of plant development and tolerance to abiotic stresses. In Arabidopsis thaliana (Mouse-ear cress), this protein is Dehydration-responsive element-binding protein 2E (DREB2E).